The following is a 161-amino-acid chain: Phosphopantetheine adenylyltransferase (161 aa).

A substrate-binding site is contributed by Thr-9. ATP is bound by residues 9–10 (TF) and His-17. Substrate contacts are provided by Lys-41, Leu-73, and Arg-87. Residues 88–90 (GLR), Glu-98, and 123–129 (LSYISST) each bind ATP.

Belongs to the bacterial CoaD family. In terms of assembly, homohexamer. It depends on Mg(2+) as a cofactor.

It localises to the cytoplasm. It catalyses the reaction (R)-4'-phosphopantetheine + ATP + H(+) = 3'-dephospho-CoA + diphosphate. It participates in cofactor biosynthesis; coenzyme A biosynthesis; CoA from (R)-pantothenate: step 4/5. In terms of biological role, reversibly transfers an adenylyl group from ATP to 4'-phosphopantetheine, yielding dephospho-CoA (dPCoA) and pyrophosphate. This is Phosphopantetheine adenylyltransferase from Hahella chejuensis (strain KCTC 2396).